We begin with the raw amino-acid sequence, 412 residues long: Short-chain specific acyl-CoA dehydrogenase, mitochondrial (412 aa).

Residues 1-24 (MAAALLARARGPLRRALGVRDWRR) constitute a mitochondrion transit peptide. The residue at position 27 (threonine 27) is a Phosphothreonine. The residue at position 51 (lysine 51) is an N6-acetyllysine; alternate. An N6-succinyllysine; alternate modification is found at lysine 51. Lysine 72 is modified (N6-acetyllysine). Lysine 129 is modified (N6-acetyllysine; alternate). At lysine 129 the chain carries N6-succinyllysine; alternate. Residues 152–161 (FALSEPGNGS) and 185–187 (WIT) contribute to the FAD site. Serine 161 contacts substrate. Lysine 208 is subject to N6-acetyllysine. Lysine 262 is subject to N6-acetyllysine; alternate. An N6-succinyllysine; alternate modification is found at lysine 262. 269 to 272 (DMGR) contributes to the substrate binding site. Lysine 292 is modified (N6-acetyllysine). Arginine 297 is a binding site for FAD. At lysine 306 the chain carries N6-acetyllysine; alternate. Lysine 306 is subject to N6-succinyllysine; alternate. Residues glutamine 308 and 365 to 369 (QILGG) contribute to the FAD site. Glutamate 392 acts as the Proton acceptor in catalysis. Glycine 393 serves as a coordination point for substrate. 394–396 (TSE) serves as a coordination point for FAD.

Belongs to the acyl-CoA dehydrogenase family. Homotetramer. It depends on FAD as a cofactor.

It localises to the mitochondrion matrix. The enzyme catalyses a short-chain 2,3-saturated fatty acyl-CoA + oxidized [electron-transfer flavoprotein] + H(+) = a short-chain (2E)-enoyl-CoA + reduced [electron-transfer flavoprotein]. It catalyses the reaction butanoyl-CoA + oxidized [electron-transfer flavoprotein] + H(+) = (2E)-butenoyl-CoA + reduced [electron-transfer flavoprotein]. It carries out the reaction pentanoyl-CoA + oxidized [electron-transfer flavoprotein] + H(+) = (2E)-pentenoyl-CoA + reduced [electron-transfer flavoprotein]. The catalysed reaction is hexanoyl-CoA + oxidized [electron-transfer flavoprotein] + H(+) = (2E)-hexenoyl-CoA + reduced [electron-transfer flavoprotein]. The protein operates within lipid metabolism; mitochondrial fatty acid beta-oxidation. Short-chain specific acyl-CoA dehydrogenase is one of the acyl-CoA dehydrogenases that catalyze the first step of mitochondrial fatty acid beta-oxidation, an aerobic process breaking down fatty acids into acetyl-CoA and allowing the production of energy from fats. The first step of fatty acid beta-oxidation consists in the removal of one hydrogen from C-2 and C-3 of the straight-chain fatty acyl-CoA thioester, resulting in the formation of trans-2-enoyl-CoA. Among the different mitochondrial acyl-CoA dehydrogenases, short-chain specific acyl-CoA dehydrogenase acts specifically on acyl-CoAs with saturated 4 to 6 carbons long primary chains. The sequence is that of Short-chain specific acyl-CoA dehydrogenase, mitochondrial (Acads) from Mus musculus (Mouse).